A 439-amino-acid chain; its full sequence is Agmatine coumaroyltransferase-1 (439 aa).

Residues His152 and Asp385 each act as proton acceptor in the active site.

It belongs to the plant acyltransferase family. In terms of assembly, monomer.

It catalyses the reaction 4-coumaroyl-CoA + agmatine = N-(4-guanidinobutyl)-4-hydroxycinnamamide + CoA + H(+). Inhibited by DEPC. Completely inhibited by ZnSO(4), strongly inhibited by CuSO(4), partially inhibited by MnCl(2). Unaffected by MgCl(2) or CaCl(2). Involved in the synthesis of hordatines (antifungal hydroxycinnamoylagmatine derivatives). Specific for agmatine as the acyl acceptor, inactive towards tyramine and putrescine. Has activity with the acyl donors 4-coumaroyl-CoA, cinnamoyl-CoA, caffeoyl-CoA, feruloyl-CoA, and to a lesser extent sinapoyl-CoA. This is Agmatine coumaroyltransferase-1 (ACT-1) from Hordeum vulgare (Barley).